Here is a 295-residue protein sequence, read N- to C-terminus: Diaminopimelate epimerase (295 aa).

Substrate-binding residues include asparagine 13, glutamine 46, and asparagine 66. Cysteine 75 (proton donor) is an active-site residue. Substrate-binding positions include 76–77, asparagine 162, asparagine 195, and 213–214; these read GN and ER. Cysteine 222 (proton acceptor) is an active-site residue. Residue 223 to 224 participates in substrate binding; the sequence is GT.

The protein belongs to the diaminopimelate epimerase family. As to quaternary structure, homodimer.

It is found in the cytoplasm. The catalysed reaction is (2S,6S)-2,6-diaminopimelate = meso-2,6-diaminopimelate. It functions in the pathway amino-acid biosynthesis; L-lysine biosynthesis via DAP pathway; DL-2,6-diaminopimelate from LL-2,6-diaminopimelate: step 1/1. Catalyzes the stereoinversion of LL-2,6-diaminopimelate (L,L-DAP) to meso-diaminopimelate (meso-DAP), a precursor of L-lysine and an essential component of the bacterial peptidoglycan. This is Diaminopimelate epimerase from Psychrobacter arcticus (strain DSM 17307 / VKM B-2377 / 273-4).